A 533-amino-acid chain; its full sequence is MRSLKRENSGSALSVRSSDSEGDSYHNMDIKKLTNKVKEIDISAFDRTRLFNPRKQRSCHKRAEPVSEEHRKKESSKNSREYTKRNRDEIVTCQKLFSEITAIMRRFKQLTEEMSVETVEVKIKSMIKDCQEMLTKYTNLDSNDRFNIGIPEAEDFLAIFREKAHATMLFEHRPESPNMYTENLFKLREQYHKLTDHKDNLNSSKDKTNYASSKSRLNQRIVREQLKSDCWVCWKSINTMMVQGEQLQEYNNELKKDIWNNILAVYHQIFTMFCKYPEYADKEKMERIVEYFAPVSRTPGHLSVVWNPMPNVVKSPRSEEIPEIKVEYEEVPSSSTFLSNNETTIASDMDMSIDRPQSMDMSQTLSPEQTLSPREKLQVQDRKISTTQETPPALPSPSGTLTLPTVPASTLKRKEFGDLLACPTGKRVTIDEPNRAERTETIMPSRQMMYPMVNYQALPMPPQSIPSMIPPFIPTIPSTSTMPPMMPYPNVLLTAAPGDVAPIDSLTPSFLRALEQQKLMAAFLNHAFQKCQK.

Disordered regions lie at residues 1–30 (MRSL…NMDI), 53–85 (PRKQ…YTKR), and 359–404 (MDMS…LTLP). Over residues 61 to 85 (KRAEPVSEEHRKKESSKNSREYTKR) the composition is skewed to basic and acidic residues. Residues 359–372 (MDMSQTLSPEQTLS) are compositionally biased toward polar residues. Residues 373 to 384 (PREKLQVQDRKI) are compositionally biased toward basic and acidic residues.

The protein localises to the nucleus. This Caenorhabditis elegans protein is Calcineurin-interacting protein 3.